The following is a 184-amino-acid chain: Zinc metalloproteinase-disintegrin-like ammodytagin (184 aa).

Positions 1 to 90 (KSAAXVTLDL…CPAKCIDNKP (90 aa)) constitute a Peptidase M12B domain. Residue Asp-20 coordinates Ca(2+). Residue His-64 coordinates Zn(2+). The active site involves Glu-65. Zn(2+) is bound by residues His-68 and His-74. Ca(2+) contacts are provided by Asn-88, Val-100, Asn-103, Phe-105, and Glu-107. The Disintegrin domain occupies 98–124 (PAVCGNYFVELTPGSQCADGVCCDQCR). Intrachain disulfides connect Cys-114–Cys-120 and Cys-165–Cys-177.

It belongs to the venom metalloproteinase (M12B) family. P-III subfamily. P-IIIc sub-subfamily. Heterodimer; disulfide-linked. Zn(2+) serves as cofactor. Post-translationally, the N-terminus is blocked. In terms of processing, N-glycosylated. Expressed by the venom gland.

Its subcellular location is the secreted. Inhibited by EDTA, DTT and zinc ions. Partially inhibited by L-cysteine. Not inhibited by 2-propanol or PMSF. Activity is enhanced by calcium or magnesium ions. In terms of biological role, snake venom zinc metalloprotease that has fibrinogenolytic and hemorrhagic activities in mouse and rats. Hydrolyzes the Aalpha-chain (FGA) and more slowly the Bbeta-chain of fibrinogen (FGB), without affecting the gamma-chain. Its hemorrhagic activity results of its involvement in cleavage of basal membrane components (nidogen and fibronectin but not laminin) and depletion of fibrinogen, prothrombin (F2) and factor X (F10) in blood circulation. Also possess potent azocaseinolytic activity and cleaves insulin B-chain, hydrolyzing it at positions Gln(4)-His(5), His(10)-Leu(11) and Tyr(16)-Leu(17). The polypeptide is Zinc metalloproteinase-disintegrin-like ammodytagin (Vipera ammodytes ammodytes (Western sand viper)).